The following is a 154-amino-acid chain: Large ribosomal subunit protein uL13 (154 aa).

The protein belongs to the universal ribosomal protein uL13 family. As to quaternary structure, part of the 50S ribosomal subunit.

Functionally, this protein is one of the early assembly proteins of the 50S ribosomal subunit, although it is not seen to bind rRNA by itself. It is important during the early stages of 50S assembly. In Bartonella quintana (strain Toulouse) (Rochalimaea quintana), this protein is Large ribosomal subunit protein uL13.